Consider the following 500-residue polypeptide: ATP synthase subunit alpha (500 aa).

Gly169–Thr176 is a binding site for ATP.

Belongs to the ATPase alpha/beta chains family. In terms of assembly, F-type ATPases have 2 components, CF(1) - the catalytic core - and CF(0) - the membrane proton channel. CF(1) has five subunits: alpha(3), beta(3), gamma(1), delta(1), epsilon(1). CF(0) has three main subunits: a(1), b(2) and c(9-12). The alpha and beta chains form an alternating ring which encloses part of the gamma chain. CF(1) is attached to CF(0) by a central stalk formed by the gamma and epsilon chains, while a peripheral stalk is formed by the delta and b chains.

It is found in the cell membrane. The catalysed reaction is ATP + H2O + 4 H(+)(in) = ADP + phosphate + 5 H(+)(out). Functionally, produces ATP from ADP in the presence of a proton gradient across the membrane. The alpha chain is a regulatory subunit. The protein is ATP synthase subunit alpha of Lactococcus lactis subsp. lactis (strain IL1403) (Streptococcus lactis).